The following is a 116-amino-acid chain: Putative antiporter subunit mnhC2 (116 aa).

The next 3 helical transmembrane spans lie at 3 to 23 (LILL…ILSL), 28 to 48 (IVIG…SMGH), and 72 to 92 (AIVL…LVLV).

It belongs to the CPA3 antiporters (TC 2.A.63) subunit C family. May form a heterooligomeric complex that consists of seven subunits: mnhA2, mnhB2, mnhC2, mnhD2, mnhE2, mnhF2 and mnhG2.

It is found in the cell membrane. This chain is Putative antiporter subunit mnhC2 (mnhC2), found in Staphylococcus haemolyticus (strain JCSC1435).